Reading from the N-terminus, the 380-residue chain is uncharacterized protein (380 aa).

This is an uncharacterized protein from Homo sapiens (Human).